The following is a 166-amino-acid chain: UPF0304 protein VV1_2093 (166 aa).

This sequence belongs to the UPF0304 family.

The protein is UPF0304 protein VV1_2093 of Vibrio vulnificus (strain CMCP6).